Here is a 244-residue protein sequence, read N- to C-terminus: Geranylgeranylglyceryl phosphate synthase (244 aa).

Residues Asp-21 and Thr-50 each contribute to the Mg(2+) site. Sn-glycerol 1-phosphate contacts are provided by residues Tyr-168 to Gly-174, Gly-200 to Gly-201, and Gly-222 to Asn-223.

It belongs to the GGGP/HepGP synthase family. Group II subfamily. Mg(2+) is required as a cofactor.

The protein resides in the cytoplasm. The catalysed reaction is sn-glycerol 1-phosphate + (2E,6E,10E)-geranylgeranyl diphosphate = sn-3-O-(geranylgeranyl)glycerol 1-phosphate + diphosphate. Its pathway is membrane lipid metabolism; glycerophospholipid metabolism. Prenyltransferase that catalyzes the transfer of the geranylgeranyl moiety of geranylgeranyl diphosphate (GGPP) to the C3 hydroxyl of sn-glycerol-1-phosphate (G1P). This reaction is the first ether-bond-formation step in the biosynthesis of archaeal membrane lipids. This chain is Geranylgeranylglyceryl phosphate synthase, found in Sulfurisphaera tokodaii (strain DSM 16993 / JCM 10545 / NBRC 100140 / 7) (Sulfolobus tokodaii).